The following is a 377-amino-acid chain: Lipoyl synthase, mitochondrial (377 aa).

Cysteine 103, cysteine 108, cysteine 114, cysteine 134, cysteine 138, cysteine 141, and serine 349 together coordinate [4Fe-4S] cluster. One can recognise a Radical SAM core domain in the interval 119-338 (EHGTQTATIM…EERGNELGFL (220 aa)).

Belongs to the radical SAM superfamily. Lipoyl synthase family. [4Fe-4S] cluster serves as cofactor.

Its subcellular location is the mitochondrion. The catalysed reaction is [[Fe-S] cluster scaffold protein carrying a second [4Fe-4S](2+) cluster] + N(6)-octanoyl-L-lysyl-[protein] + 2 oxidized [2Fe-2S]-[ferredoxin] + 2 S-adenosyl-L-methionine + 4 H(+) = [[Fe-S] cluster scaffold protein] + N(6)-[(R)-dihydrolipoyl]-L-lysyl-[protein] + 4 Fe(3+) + 2 hydrogen sulfide + 2 5'-deoxyadenosine + 2 L-methionine + 2 reduced [2Fe-2S]-[ferredoxin]. It participates in protein modification; protein lipoylation via endogenous pathway; protein N(6)-(lipoyl)lysine from octanoyl-[acyl-carrier-protein]: step 2/2. Its function is as follows. Catalyzes the radical-mediated insertion of two sulfur atoms into the C-6 and C-8 positions of the octanoyl moiety bound to the lipoyl domains of lipoate-dependent enzymes, thereby converting the octanoylated domains into lipoylated derivatives. This is Lipoyl synthase, mitochondrial from Drosophila melanogaster (Fruit fly).